The chain runs to 407 residues: D-inositol 3-phosphate glycosyltransferase (407 aa).

Residue histidine 2 coordinates 1D-myo-inositol 3-phosphate. UDP-N-acetyl-alpha-D-glucosamine-binding positions include 8–9 (QP) and glycine 16. Residues 13–18 (DAGGLN), arginine 71, tyrosine 104, threonine 128, and arginine 148 each bind 1D-myo-inositol 3-phosphate. UDP-N-acetyl-alpha-D-glucosamine is bound by residues arginine 222 and lysine 227. Residues tyrosine 297, arginine 298, and alanine 300 each contribute to the Mg(2+) site. Glutamate 310 and glutamate 318 together coordinate UDP-N-acetyl-alpha-D-glucosamine. Threonine 324 is a binding site for Mg(2+).

This sequence belongs to the glycosyltransferase group 1 family. MshA subfamily. As to quaternary structure, homodimer.

It carries out the reaction 1D-myo-inositol 3-phosphate + UDP-N-acetyl-alpha-D-glucosamine = 1D-myo-inositol 2-acetamido-2-deoxy-alpha-D-glucopyranoside 3-phosphate + UDP + H(+). Its function is as follows. Catalyzes the transfer of a N-acetyl-glucosamine moiety to 1D-myo-inositol 3-phosphate to produce 1D-myo-inositol 2-acetamido-2-deoxy-glucopyranoside 3-phosphate in the mycothiol biosynthesis pathway. The protein is D-inositol 3-phosphate glycosyltransferase of Frankia alni (strain DSM 45986 / CECT 9034 / ACN14a).